We begin with the raw amino-acid sequence, 218 residues long: Thiopurine S-methyltransferase (218 aa).

Residues Trp10, Leu45, Glu66, and Arg123 each coordinate S-adenosyl-L-methionine.

This sequence belongs to the class I-like SAM-binding methyltransferase superfamily. TPMT family.

Its subcellular location is the cytoplasm. It catalyses the reaction S-adenosyl-L-methionine + a thiopurine = S-adenosyl-L-homocysteine + a thiopurine S-methylether.. The polypeptide is Thiopurine S-methyltransferase (Pseudomonas fluorescens (strain SBW25)).